The sequence spans 228 residues: UPF0758 protein STER_1430 (228 aa).

The MPN domain occupies 103–225 (QIMSSQQVAR…YYSFREERED (123 aa)). Zn(2+) is bound by residues His-174, His-176, and Asp-187. The JAMM motif motif lies at 174-187 (HNHPSGEAYPSRND).

It belongs to the UPF0758 family.

The protein is UPF0758 protein STER_1430 of Streptococcus thermophilus (strain ATCC BAA-491 / LMD-9).